The sequence spans 279 residues: MQFWKVHGARNDFVLVDETEEEVVPESDKPDFARWACDRRSGVGADGVVFIRSDPPSVEMRIFNRDGSEAEFCGNAARCVVKYVTEVRGENVKILRTLSGAHRVEVQGGWIAVEVPEAEIKKVVELGYEVDAGVPHFVRLTERDPIHDFGGLTDEAKTIFSEYEPKGGVNVTYAAPSVDELRVRTFERGVGWTPACGSGVVAASLVYSEIFGPFEEVSVRTAGGCLRVSLSDGPLLIGRAEIVYKGELRGDWRENTDHQRRRHSLSRSPSGRPRLQECR.

Residues Asn11 and Asn64 each contribute to the substrate site. Catalysis depends on Cys73, which acts as the Proton donor. Residues Gly74 to Asn75, Asn170, and Glu187 to Arg188 contribute to the substrate site. The active-site Proton acceptor is the Cys196. Gly197–Ser198 provides a ligand contact to substrate. The interval Asn255–Arg279 is disordered.

This sequence belongs to the diaminopimelate epimerase family. In terms of assembly, homodimer.

It localises to the cytoplasm. The catalysed reaction is (2S,6S)-2,6-diaminopimelate = meso-2,6-diaminopimelate. The protein operates within amino-acid biosynthesis; L-lysine biosynthesis via DAP pathway; DL-2,6-diaminopimelate from LL-2,6-diaminopimelate: step 1/1. Catalyzes the stereoinversion of LL-2,6-diaminopimelate (L,L-DAP) to meso-diaminopimelate (meso-DAP), a precursor of L-lysine. The protein is Diaminopimelate epimerase of Methanopyrus kandleri (strain AV19 / DSM 6324 / JCM 9639 / NBRC 100938).